Reading from the N-terminus, the 293-residue chain is Bifunctional monothiol glutaredoxin-S16, chloroplastic (293 aa).

Residues 1 to 62 constitute a chloroplast transit peptide; the sequence is MAAITISSSL…APSRRRSFFI (62 aa). A disulfide bridge links Cys123 with Cys219. The 100-residue stretch at 194-293 folds into the Glutaredoxin domain; it reads EELIDRLVKE…ENGELANILN (100 aa). Lys211 lines the glutathione pocket. Cys219 is a [2Fe-2S] cluster binding site. Glutathione is bound by residues Arg251, Phe263, and 276-277; that span reads CD.

Belongs to the glutaredoxin family. CGFS subfamily. As to quaternary structure, [2Fe-2S]-bridged holo-homodimer. Interacts in vitro with SUFE1, BOLA1, BOLA2 and BOLA4. Interacts in vivo only with SUFE1, BOLA1 and BOLA4. Interacts with SBP1.

The protein localises to the plastid. It is found in the chloroplast. The formation of an intramolecular disulfide bond negatively regulates both the N-terminal endonuclease and the C-terminal glutaredoxin activities. Functionally, may only reduce GSH-thiol disulfides, but not protein disulfides. Participates probably to the maturation of iron-sulfur proteins and to the regulation of the redox state of the BOLA proteins. The GRXS16-BOLA1 heterodimer binds a labile, oxygen sensitive iron-sulfur cluster. Able to cleave linearized DNA in vitro. The chain is Bifunctional monothiol glutaredoxin-S16, chloroplastic from Arabidopsis thaliana (Mouse-ear cress).